A 3174-amino-acid polypeptide reads, in one-letter code: Probable polyketide synthase 15 (3174 aa).

In terms of domain architecture, Ketosynthase family 3 (KS3) spans 23–474 (NDEIAIVGIG…GSNCCLILSQ (452 aa)). Catalysis depends on for beta-ketoacyl synthase activity residues Cys-194, His-342, and His-397. Coiled-coil stretches lie at residues 472–509 (LSQF…QYDN) and 574–604 (EFNK…RVQT). Residues 578 to 599 (QKQSQKEKEKEKEREGEEKEQL) show a composition bias toward basic and acidic residues. The tract at residues 578-601 (QKQSQKEKEKEKEREGEEKEQLNR) is disordered. Residues 707–740 (GIEASFIVGHSLGEIPAAYCSGMITLDTLCYLIY) form an acyl/malonyl transferase region. Ser-717 serves as the catalytic For acyl/malonyl transferase activity. Positions 1034–1156 (IDILGLSNYD…ANFQLLNNNN (123 aa)) are N-terminal hotdog fold. In terms of domain architecture, PKS/mFAS DH spans 1034–1332 (IDILGLSNYD…CKSLKIVKNP (299 aa)). His-1068 serves as the catalytic Proton acceptor; for dehydratase activity. The interval 1182–1332 (NKTKISRIDL…CKSLKIVKNP (151 aa)) is C-terminal hotdog fold. Asp-1241 serves as the catalytic Proton donor; for dehydratase activity. Positions 1758 to 1793 (LEININNNNNNNNNNNNNNNNNNNNNNNNNNYEDNV) form a coiled coil. The Carrier domain occupies 2653-2730 (VDSLNIKDIF…LVIKIIITAI (78 aa)). Ser-2690 carries the O-(pantetheine 4'-phosphoryl)serine modification.

Pantetheine 4'-phosphate serves as cofactor.

Its function is as follows. Probable polyketide synthase. In Dictyostelium discoideum (Social amoeba), this protein is Probable polyketide synthase 15 (pks15).